We begin with the raw amino-acid sequence, 61 residues long: Short neurotoxin 1 (61 aa).

Cystine bridges form between cysteine 3–cysteine 23, cysteine 17–cysteine 40, cysteine 42–cysteine 53, and cysteine 54–cysteine 59.

It belongs to the three-finger toxin family. Short-chain subfamily. Type I alpha-neurotoxin sub-subfamily. As to expression, expressed by the venom gland.

The protein resides in the secreted. Binds to muscle nicotinic acetylcholine receptor (nAChR) and inhibit acetylcholine from binding to the receptor, thereby impairing neuromuscular transmission. The chain is Short neurotoxin 1 from Naja annulata annulata (Banded water cobra).